Reading from the N-terminus, the 231-residue chain is Ribosyldihydronicotinamide dehydrogenase [quinone] (231 aa).

Residues histidine 12, 18–21, and 104–107 contribute to the FAD site; these read FNGS and LYWF. 127–129 provides a ligand contact to substrate; it reads FDI. FAD-binding positions include 148 to 151 and tyrosine 156; that span reads TTGG. The Zn(2+) site is built by histidine 174 and histidine 178. Position 194 (aspartate 194) interacts with FAD. Serine 197 is subject to Phosphoserine. Arginine 201 lines the FAD pocket. Cysteine 223 is a Zn(2+) binding site.

Belongs to the NAD(P)H dehydrogenase (quinone) family. As to quaternary structure, homodimer. The cofactor is Zn(2+). Requires FAD as cofactor.

The protein localises to the cytoplasm. The catalysed reaction is 1-(beta-D-ribofuranosyl)-1,4-dihydronicotinamide + a quinone + H(+) = beta-nicotinamide D-riboside + a quinol. Its function is as follows. The enzyme apparently serves as a quinone reductase in connection with conjugation reactions of hydroquinones involved in detoxification pathways as well as in biosynthetic processes such as the vitamin K-dependent gamma-carboxylation of glutamate residues in prothrombin synthesis. In Mus musculus (Mouse), this protein is Ribosyldihydronicotinamide dehydrogenase [quinone] (Nqo2).